A 2820-amino-acid polypeptide reads, in one-letter code: Neurofibromin (2820 aa).

Alanine 2 carries the N-acetylalanine modification. Phosphoserine occurs at positions 866 and 878. The Ras-GAP domain maps to 1253–1463 (HLLYQLLWNM…DLARRFFLDI (211 aa)). The 159-residue stretch at 1561–1719 (EKEEFKALKT…ATLALEEDLK (159 aa)) folds into the CRAL-TRIO domain. A lipid binding region spans residues 1561–1818 (EKEEFKALKT…RTRWELSQPD (258 aa)). 2 positions are modified to phosphoserine: serine 2169 and serine 2448. Residues 2457 to 2482 (YPIHHGDPSSRTLKETQPWSSPRGSE) are disordered. Residues 2458–2470 (PIHHGDPSSRTLK) are compositionally biased toward basic and acidic residues. Position 2495 is a phosphothreonine (threonine 2495). Serine 2496, serine 2502, serine 2504, and serine 2524 each carry phosphoserine. Residues 2536–2552 (KRQEMESGITTPPKMRR) carry the Bipartite nuclear localization signal motif. The residue at position 2546 (threonine 2546) is a Phosphothreonine. Phosphoserine is present on residues serine 2578, serine 2783, and serine 2798. The segment at 2768–2820 (TSQHSPGIDKENVELSPTTGHCNSGRTRHGSASQVQKQRSAGSFKRNSIKKIV) is disordered. Residues 2782-2808 (LSPTTGHCNSGRTRHGSASQVQKQRSA) are compositionally biased toward polar residues.

As to quaternary structure, interacts with HTR6. Interacts with SPRED2. In terms of processing, ubiquitinated by RNF7/RBX2, leading to its degradation.

The protein localises to the nucleus. It is found in the nucleolus. The protein resides in the cell membrane. Its function is as follows. Stimulates the GTPase activity of Ras. NF1 shows greater affinity for Ras GAP, but lower specific activity. May be a regulator of Ras activity. This chain is Neurofibromin (Nf1), found in Rattus norvegicus (Rat).